Reading from the N-terminus, the 57-residue chain is COP9 signalosome complex subunit 9 (57 aa).

Belongs to the CSN9 family. As to quaternary structure, component of the CSN complex, probably composed of cops1, cops2, cops3, cops4, cops5, cops6, cops7, cops8 and cops9.

It is found in the nucleus. It localises to the cytoplasm. Its subcellular location is the nucleoplasm. Component of the COP9 signalosome complex (CSN), a complex involved in various cellular and developmental processes. The CSN complex is an essential regulator of the ubiquitin (Ubl) conjugation pathway by mediating the deneddylation of the cullin subunits of SCF-type E3 ligase complexes, leading to decrease the Ubl ligase activity. May play a role in cell proliferation. This is COP9 signalosome complex subunit 9 from Xenopus tropicalis (Western clawed frog).